Here is a 159-residue protein sequence, read N- to C-terminus: Protein Smg homolog (159 aa).

It belongs to the Smg family.

The chain is Protein Smg homolog from Vibrio vulnificus (strain CMCP6).